The chain runs to 70 residues: Small, acid-soluble spore protein 1 (70 aa).

It belongs to the alpha/beta-type SASP family.

In terms of biological role, SASP are bound to spore DNA. They are double-stranded DNA-binding proteins that cause DNA to change to an a-like conformation. They protect the DNA backbone from chemical and enzymatic cleavage and are thus involved in dormant spore's high resistance to UV light. The sequence is that of Small, acid-soluble spore protein 1 (sasP-1) from Geobacillus stearothermophilus (Bacillus stearothermophilus).